The primary structure comprises 477 residues: Trigger factor (477 aa).

The region spanning 169–254 (EDRVTIDYLG…VKEVAKPNEL (86 aa)) is the PPIase FKBP-type domain. Residues 435–477 (VSKEELTAEDEDAASEAKPAKKAAPKKKAAPKKKADEGKSEEA) form a disordered region. Over residues 454 to 466 (AKKAAPKKKAAPK) the composition is skewed to basic residues. A compositionally biased stretch (basic and acidic residues) spans 467–477 (KKADEGKSEEA).

This sequence belongs to the FKBP-type PPIase family. Tig subfamily.

Its subcellular location is the cytoplasm. It catalyses the reaction [protein]-peptidylproline (omega=180) = [protein]-peptidylproline (omega=0). Its function is as follows. Involved in protein export. Acts as a chaperone by maintaining the newly synthesized protein in an open conformation. Functions as a peptidyl-prolyl cis-trans isomerase. The protein is Trigger factor of Brucella anthropi (strain ATCC 49188 / DSM 6882 / CCUG 24695 / JCM 21032 / LMG 3331 / NBRC 15819 / NCTC 12168 / Alc 37) (Ochrobactrum anthropi).